Consider the following 337-residue polypeptide: Ribosomal RNA small subunit methyltransferase C (337 aa).

The protein belongs to the methyltransferase superfamily. RsmC family. In terms of assembly, monomer.

The protein localises to the cytoplasm. The catalysed reaction is guanosine(1207) in 16S rRNA + S-adenosyl-L-methionine = N(2)-methylguanosine(1207) in 16S rRNA + S-adenosyl-L-homocysteine + H(+). Functionally, specifically methylates the guanine in position 1207 of 16S rRNA in the 30S particle. This chain is Ribosomal RNA small subunit methyltransferase C, found in Proteus mirabilis (strain HI4320).